The sequence spans 348 residues: Protein RecA (348 aa).

Position 64–71 (64–71 (GPESSGKT)) interacts with ATP. Residues 325–335 (YEIDGANKEPL) are compositionally biased toward basic and acidic residues. Residues 325 to 348 (YEIDGANKEPLEETEETLSLLDDE) are disordered. Positions 336–348 (EETEETLSLLDDE) are enriched in acidic residues.

This sequence belongs to the RecA family.

It is found in the cytoplasm. In terms of biological role, can catalyze the hydrolysis of ATP in the presence of single-stranded DNA, the ATP-dependent uptake of single-stranded DNA by duplex DNA, and the ATP-dependent hybridization of homologous single-stranded DNAs. It interacts with LexA causing its activation and leading to its autocatalytic cleavage. The polypeptide is Protein RecA (Listeria welshimeri serovar 6b (strain ATCC 35897 / DSM 20650 / CCUG 15529 / CIP 8149 / NCTC 11857 / SLCC 5334 / V8)).